Consider the following 151-residue polypeptide: Large ribosomal subunit protein uL15 (151 aa).

Positions 1 to 62 (MVKLNELFPK…GGQMPLYRRV (62 aa)) are disordered. Over residues 11–20 (HGSRKAKRRI) the composition is skewed to basic residues.

Belongs to the universal ribosomal protein uL15 family. As to quaternary structure, part of the 50S ribosomal subunit.

Binds to the 23S rRNA. The protein is Large ribosomal subunit protein uL15 of Elusimicrobium minutum (strain Pei191).